Reading from the N-terminus, the 336-residue chain is Uroporphyrinogen decarboxylase (336 aa).

Substrate contacts are provided by residues 24-28 (RQVGR), Asp-73, Tyr-142, Ser-197, and His-312.

The protein belongs to the uroporphyrinogen decarboxylase family. In terms of assembly, homodimer.

Its subcellular location is the cytoplasm. It carries out the reaction uroporphyrinogen III + 4 H(+) = coproporphyrinogen III + 4 CO2. The protein operates within porphyrin-containing compound metabolism; protoporphyrin-IX biosynthesis; coproporphyrinogen-III from 5-aminolevulinate: step 4/4. Catalyzes the decarboxylation of four acetate groups of uroporphyrinogen-III to yield coproporphyrinogen-III. This chain is Uroporphyrinogen decarboxylase, found in Chlamydia trachomatis serovar L2 (strain ATCC VR-902B / DSM 19102 / 434/Bu).